Consider the following 1136-residue polypeptide: DNA-directed RNA polymerase I subunit RPA2 (1136 aa).

The interval 1–24 (MDPGSRWRNLPSGPSLKHLTDPSY) is disordered. Arg-180 is a binding site for RNA. The loop B stretch occupies residues 194–208 (VRPKWKTRGPGYTHY). Residues 236-247 (LNFIYRKELFFL) are loop A. RNA is bound at residue Asp-367. Fork loop stretches follow at residues 439-453 (LRSKTGLGLLQDSGL) and 474-489 (RGADFAKMRTTTVRRL). RNA is bound at residue Lys-890. Arg-1020 and Arg-1036 together coordinate DNA. Ser-1051 is modified (phosphoserine). Cys-1071, Cys-1074, Cys-1099, and Cys-1102 together coordinate Zn(2+). Residues 1071–1102 (CVKCGSLLSPLLEKPPPSWSAMRNRKYNCTLC) form a C4-type zinc finger.

This sequence belongs to the RNA polymerase beta chain family. Component of the RNA polymerase I (Pol I) complex consisting of 13 subunits: a ten-subunit catalytic core composed of POLR1A/RPA1, POLR1B/RPA2, POLR1C/RPAC1, POLR1D/RPAC2, POLR1H/RPA12, POLR2E/RPABC1, POLR2F/RPABC2, POLR2H/RPABC3, POLR2K/RPABC4 and POLR2L/RPABC5; a mobile stalk subunit POLR1F/RPA43 protruding from the core and additional subunits homologous to general transcription factors POLR1E/RPA49 and POLR1G/RPA34. Part of Pol I pre-initiation complex (PIC), in which Pol I core assembles with RRN3 and promoter-bound UTBF and SL1/TIF-IB complex.

The protein resides in the nucleus. The protein localises to the nucleolus. Its subcellular location is the chromosome. It carries out the reaction RNA(n) + a ribonucleoside 5'-triphosphate = RNA(n+1) + diphosphate. Its function is as follows. Catalytic core component of RNA polymerase I (Pol I), a DNA-dependent RNA polymerase which synthesizes ribosomal RNA precursors using the four ribonucleoside triphosphates as substrates. Transcribes 47S pre-rRNAs from multicopy rRNA gene clusters, giving rise to 5.8S, 18S and 28S ribosomal RNAs. Pol I-mediated transcription cycle proceeds through transcription initiation, transcription elongation and transcription termination stages. During transcription initiation, Pol I pre-initiation complex (PIC) is recruited by the selectivity factor 1 (SL1/TIF-IB) complex bound to the core promoter that precedes an rDNA repeat unit. The PIC assembly bends the promoter favoring the formation of the transcription bubble and promoter escape. Once the polymerase has escaped from the promoter it enters the elongation phase during which RNA is actively polymerized, based on complementarity with the template DNA strand. Highly processive, assembles in structures referred to as 'Miller trees' where many elongating Pol I complexes queue and transcribe the same rDNA coding regions. At terminator sequences downstream of the rDNA gene, PTRF interacts with Pol I and halts Pol I transcription leading to the release of the RNA transcript and polymerase from the DNA. Forms Pol I active center together with the largest subunit POLR1A/RPA1. Appends one nucleotide at a time to the 3' end of the nascent RNA, with POLR1A/RPA1 contributing a Mg(2+)-coordinating DxDGD motif, and POLR1B/RPA2 providing lysine residues believed to facilitate Watson-Crick base pairing between the incoming nucleotide and the template base. Typically, Mg(2+) ions direct a 5' nucleoside triphosphate to form a phosphodiester bond with the 3' hydroxyl of the preceding nucleotide of the nascent RNA, with the elimination of pyrophosphate. Has proofreading activity: Pauses and backtracks to allow the cleavage of a missincorporated nucleotide via POLR1H/RPA12. High Pol I processivity is associated with decreased transcription fidelity. This chain is DNA-directed RNA polymerase I subunit RPA2 (POLR1B), found in Pongo abelii (Sumatran orangutan).